Consider the following 141-residue polypeptide: ATP synthase epsilon chain (141 aa).

Belongs to the ATPase epsilon chain family. F-type ATPases have 2 components, CF(1) - the catalytic core - and CF(0) - the membrane proton channel. CF(1) has five subunits: alpha(3), beta(3), gamma(1), delta(1), epsilon(1). CF(0) has three main subunits: a, b and c.

The protein localises to the cell inner membrane. Functionally, produces ATP from ADP in the presence of a proton gradient across the membrane. This chain is ATP synthase epsilon chain, found in Gluconacetobacter diazotrophicus (strain ATCC 49037 / DSM 5601 / CCUG 37298 / CIP 103539 / LMG 7603 / PAl5).